A 100-amino-acid polypeptide reads, in one-letter code: Tuberoinfundibular peptide of 39 residues (100 aa).

Positions 1–30 (METRQVSRSPRVRLLLLLLLLLVVPWGVRT) are cleaved as a signal peptide. Positions 31-59 (ASGVALPPVGVLSLRPPGRAWADPATPRP) are excised as a propeptide.

This sequence belongs to the parathyroid hormone family. As to quaternary structure, ligand of high affinity for the PTH2 receptor (PTH2R).

The protein localises to the secreted. Its function is as follows. Plays a role as a potent and selective agonist of PTH2R resulting in adenyl cyclase activation and intracellular calcium levels elevation. Induces protein kinase C beta activation, recruitment of beta-arrestin and PTH2R internalization. May inhibit cell proliferation via its action of PTH2R activation. Neuropeptide which may also have a role in spermatogenesis. May activate nociceptors and nociceptive circuits. The polypeptide is Tuberoinfundibular peptide of 39 residues (PTH2) (Bos taurus (Bovine)).